The following is a 150-amino-acid chain: Arginine repressor (150 aa).

This sequence belongs to the ArgR family.

It is found in the cytoplasm. Its pathway is amino-acid biosynthesis; L-arginine biosynthesis [regulation]. Functionally, regulates arginine biosynthesis genes. In Psychromonas ingrahamii (strain DSM 17664 / CCUG 51855 / 37), this protein is Arginine repressor.